A 488-amino-acid chain; its full sequence is MEQYTIKFNQINHKLTDLRSLNIDHLYAYQFEKIALIGGNGTGKTTLLNMIAQKTKPESGTVETNGEIQYFEQLNMDVENDFNTLDGSLMSELHIPMHTTDSMSGGEKAKYKLANVISNYSPILLLDEPTNHLDKIGKDYLNNILKYYYGTLIIVSHDRALIDQIADTIWDIQEDGTIRVFKGNYTQYQNQYEQEQLEQQRKYEQYISEKQRLSQASKAKRNQAQQMAQASSKQKNKSIAPDRLSASKEKGTVEKAAQKQAKHIEKRMEHLEEVEKPQSYHEFNFPQNKIYDIHNNYPIIAQNLTLVKGSQKLLTQVRFQIPYGKNIALVGANGVGKTTLLEAIYHQIEGIDCSPKVQMAYYRQLAYEDMRDVSLLQYLMDETDSSESFSRAILNNLGLNEALERSCNVLSGGERTKLSLAVLFSTKANMLILDEPTNFLDIKTLEALEMFMNKYPGIILFTSHDTRFVKHVSDKKWELTGQSIHDIT.

Positions 6–199 constitute an ABC transporter 1 domain; it reads IKFNQINHKL…NQYEQEQLEQ (194 aa). 38 to 45 contacts ATP; that stretch reads GGNGTGKT. A Q-linker, rich in Glu and hydrophilic AA region spans residues 200–298; it reads QRKYEQYISE…KIYDIHNNYP (99 aa). Residues 211-255 are disordered; sequence QRLSQASKAKRNQAQQMAQASSKQKNKSIAPDRLSASKEKGTVEK. Residues 222-233 are compositionally biased toward low complexity; sequence NQAQQMAQASSK. Residues 245–255 are compositionally biased toward basic and acidic residues; it reads SASKEKGTVEK. One can recognise an ABC transporter 2 domain in the interval 299–487; that stretch reads IIAQNLTLVK…ELTGQSIHDI (189 aa). 331 to 338 contributes to the ATP binding site; the sequence is GANGVGKT.

This sequence belongs to the ABC transporter superfamily.

Confers resistance to 14-membered ring macrolides (like erythromycin) and to B streptogramins, by acting as an ATP-dependent efflux pump. The chain is Erythromycin resistance ATP-binding protein MsrA (msrA) from Staphylococcus epidermidis.